A 423-amino-acid chain; its full sequence is Testican-2 (423 aa).

An N-terminal signal peptide occupies residues 1–22; the sequence is MRAPGSGRLALPLLLLAVVALA. At S72 the chain carries Phosphoserine. Intrachain disulfides connect C90–C101, C95–C111, C136–C166, C139–C159, and C148–C180. One can recognise a Kazal-like domain in the interval 130–182; sequence GGKDSVCKPCHMAQLASVCGSDGHTYSSVCKLEQQACLSSKQLAVRCEGPCPC. Residue N225 is glycosylated (N-linked (GlcNAc...) asparagine). In terms of domain architecture, Thyroglobulin type-1 spans 309 to 375; that stretch reads KPPCLAELER…GTRMHGTPDC (67 aa). 3 cysteine pairs are disulfide-bonded: C312–C336, C347–C354, and C356–C375. 2 O-linked (Xyl...) (glycosaminoglycan) serine glycosylation sites follow: S382 and S387. The segment at 387 to 423 is disordered; the sequence is SGVGWEDEEEKETEEAGEEAEEEEGEAGEADDGGYIW. Positions 391–423 are enriched in acidic residues; that stretch reads WEDEEEKETEEAGEEAEEEEGEAGEADDGGYIW.

Post-translationally, O-glycosylated; contains chondroitin sulfate and heparan sulfate. Brain specific.

The protein resides in the secreted. Its subcellular location is the extracellular space. It is found in the extracellular matrix. May participate in diverse steps of neurogenesis. Binds calcium. This Mus musculus (Mouse) protein is Testican-2 (Spock2).